Consider the following 288-residue polypeptide: Aminoglycoside 6-adenylyltransferase (288 aa).

It carries out the reaction streptomycin + ATP = 6-O-adenylylstreptomycin + diphosphate. Its function is as follows. Mediates bacterial resistance to streptomycin, is probably a streptomycin 6-adenylyltransferase. The chain is Aminoglycoside 6-adenylyltransferase from Campylobacter jejuni.